We begin with the raw amino-acid sequence, 198 residues long: uncharacterized protein (198 aa).

An HTH tetR-type domain is found at 11–71 (EGTHKAILSA…DSFLSTATDR (61 aa)). A DNA-binding region (H-T-H motif) is located at residues 34–53 (TVDKIAERAKVSKATIYKWW).

This is an uncharacterized protein from Bacillus subtilis (strain 168).